The primary structure comprises 217 residues: Flagellar L-ring protein 2 (217 aa).

The signal sequence occupies residues 1–15 (MRILLALTWLAWLGA). A lipid anchor (N-palmitoyl cysteine) is attached at C16. The S-diacylglycerol cysteine moiety is linked to residue C16.

Belongs to the FlgH family. The basal body constitutes a major portion of the flagellar organelle and consists of four rings (L,P,S, and M) mounted on a central rod.

The protein resides in the cell outer membrane. The protein localises to the bacterial flagellum basal body. Functionally, assembles around the rod to form the L-ring and probably protects the motor/basal body from shearing forces during rotation. The protein is Flagellar L-ring protein 2 of Burkholderia thailandensis (strain ATCC 700388 / DSM 13276 / CCUG 48851 / CIP 106301 / E264).